Here is a 362-residue protein sequence, read N- to C-terminus: Peptide chain release factor 1 (362 aa).

Gln-237 carries the post-translational modification N5-methylglutamine. Positions 282–296 (QQEEDKRRAEADSTR) are enriched in basic and acidic residues. Positions 282 to 304 (QQEEDKRRAEADSTRRSILSTGD) are disordered.

It belongs to the prokaryotic/mitochondrial release factor family. Methylated by PrmC. Methylation increases the termination efficiency of RF1.

It is found in the cytoplasm. Peptide chain release factor 1 directs the termination of translation in response to the peptide chain termination codons UAG and UAA. The polypeptide is Peptide chain release factor 1 (Tolumonas auensis (strain DSM 9187 / NBRC 110442 / TA 4)).